Here is a 501-residue protein sequence, read N- to C-terminus: Cytochrome P450 monooxygenase esdpH (501 aa).

The helical transmembrane segment at 5 to 22 (RVGILIIGVLATATFWLC) threads the bilayer. Residue cysteine 446 participates in heme binding.

It belongs to the cytochrome P450 family. Requires heme as cofactor.

The protein localises to the membrane. The protein operates within secondary metabolite biosynthesis; terpenoid biosynthesis. Functionally, cytochrome P450 monooxygenase; part of the cluster that mediates the biosynthesis of shearones, diterpenoid pyrones (DPs) which are structurally diverse meroterpenoids consisting of a diterpene linked by a pyrone, and which may exhibit a range of bioactivities. Whitin the pathway, esdpH takes part in the molecular scaffold modification via the hydroxylation at C-6' and can transform shearone C into shearone E, shearone D into shearone F, and shearone H into shearone I, the latter being the final product of the pathway. The molecular scaffold is commonly biosynthesized by a series of enzymes including the non-reducing polyketide synthase (NR-PKS) esdpA that generates an alpha-pyrone; the prenyltransferase esdpC that attaches a geranylgeranyl pyrophosphate (GGPP) produced by the GGPP synthase (GGPPS) esdpD onto the pyrone unit; the FAD-dependent monooxygenase esdpE that converts an olefin on the diterpene unit into an epoxide; and the terpene cyclase esdpB that catalyzes the cyclization reactions to give the molecular backbone shearone A. In the modification steps, esdpF oxidizes the hydroxy group to a ketone at C-3 and esdpG then attaches hydroxy groups at both C-11 and C-12. After that, esdpI hydroxylates at C-20 and esdpH hydroxylates at C-6'. The ether bridge is generated by nucleophilic attack of the hydroxy group at C-20 to the carbonyl carbon at C-3. EsdpH can also functions prior to esdpI. The different combinations of these modification enzymes lead to the production of diverse shearone derivatives, shearone I being the end product of the pathway. The alpha-ketoglutarate-dependent dioxygenase esdpJ seems not to be involved in this pathway. The chain is Cytochrome P450 monooxygenase esdpH from Penicillium shearii (Eupenicillium shearii).